Reading from the N-terminus, the 177-residue chain is Ribosome maturation factor RimP (177 aa).

It belongs to the RimP family.

The protein resides in the cytoplasm. Required for maturation of 30S ribosomal subunits. The protein is Ribosome maturation factor RimP of Mycobacterium marinum (strain ATCC BAA-535 / M).